The primary structure comprises 671 residues: Chitin biosynthesis protein CHS5 (671 aa).

In terms of domain architecture, Fibronectin type-III spans 78-168; the sequence is KPESPVLKIV…EKVILRTHKM (91 aa). Residues 166–262 enclose the BRCT domain; that stretch reads HKMTDMSGIT…RIVGVRGFYL (97 aa). Positions 280-671 are disordered; that stretch reads EELSYSKENE…KKNKKKGKKK (392 aa). Thr-305 carries the phosphothreonine modification. Residues 311-321 are compositionally biased toward polar residues; the sequence is ASPNDNESNPS. Residues 322-332 show a composition bias toward basic and acidic residues; it reads EAKEQGEKSGH. A phosphoserine mark is found at Ser-338, Ser-362, Ser-365, Ser-383, and Ser-384. The segment covering 349–365 has biased composition (polar residues); that stretch reads ALENETTIETVNPSVRS. The segment covering 409-419 has biased composition (basic and acidic residues); it reads KSEDTDTHSNE. A compositionally biased stretch (polar residues) spans 434–443; that stretch reads NNITTESAGE. Acidic residues predominate over residues 461–486; sequence EIETPEVNESIEDANEPAEDSNEPVE. Residues 487 to 521 show a composition bias toward basic and acidic residues; that stretch reads DSNKPVKDSNKPVEDSNKPVEDSNKPVEDSNKPVE. Residues 522-538 show a composition bias toward acidic residues; sequence DANEPVEDTSEPVEDAG. Positions 542–551 are enriched in polar residues; that stretch reads QETNEFTTDI. Phosphoserine occurs at positions 573 and 579. Positions 581–591 are enriched in basic and acidic residues; it reads EDVKPEEKGSE. A Glycyl lysine isopeptide (Lys-Gly) (interchain with G-Cter in ubiquitin) cross-link involves residue Lys-584. Ser-590 carries the post-translational modification Phosphoserine. Residues 606 to 620 are compositionally biased toward polar residues; sequence GESTTHQKTEASASL. Over residues 627 to 638 the composition is skewed to acidic residues; that stretch reads EEQETTEAEVNT. Positions 657 to 671 are enriched in basic residues; sequence NKKKNKKNKKKGKKK.

The protein belongs to the CHS5 family. In terms of assembly, component of the CHS5/6 complex composed of the 4 CHAPS proteins BCH1, BCH2, BUD7, and CHS6 as well as at least CHS5 and GTP-bound ARF1. The complex interacts with the cargo protein CHS3.

The protein localises to the golgi apparatus. It is found in the trans-Golgi network membrane. In terms of biological role, component of the CHS5/6 complex which mediates export of specific cargo proteins, including chitin synthase CHS3. Also involved in targeting FUS1 to sites of polarized growth. This is Chitin biosynthesis protein CHS5 (CHS5) from Saccharomyces cerevisiae (strain ATCC 204508 / S288c) (Baker's yeast).